The chain runs to 346 residues: S-adenosylmethionine:tRNA ribosyltransferase-isomerase (346 aa).

The protein belongs to the QueA family. As to quaternary structure, monomer.

The protein localises to the cytoplasm. The enzyme catalyses 7-aminomethyl-7-carbaguanosine(34) in tRNA + S-adenosyl-L-methionine = epoxyqueuosine(34) in tRNA + adenine + L-methionine + 2 H(+). The protein operates within tRNA modification; tRNA-queuosine biosynthesis. Its function is as follows. Transfers and isomerizes the ribose moiety from AdoMet to the 7-aminomethyl group of 7-deazaguanine (preQ1-tRNA) to give epoxyqueuosine (oQ-tRNA). This chain is S-adenosylmethionine:tRNA ribosyltransferase-isomerase, found in Cereibacter sphaeroides (strain KD131 / KCTC 12085) (Rhodobacter sphaeroides).